The following is a 369-amino-acid chain: RING-H2 finger protein ATL47 (369 aa).

The helical transmembrane segment at 52 to 72 threads the bilayer; that stretch reads IILFIIVLLSVIFFICSILHL. The RING-type; atypical zinc-finger motif lies at 144–186; it reads CAVCLCEFSEDDKLRLLPNCSHAFHIDCIDTWLLSNSTCPLCR. Positions 332-355 are disordered; it reads NNHPSETNLVVGGSSSSSSYVCSG. Residues 341-355 are compositionally biased toward low complexity; the sequence is VVGGSSSSSSYVCSG.

The protein belongs to the RING-type zinc finger family. ATL subfamily.

It localises to the membrane. The catalysed reaction is S-ubiquitinyl-[E2 ubiquitin-conjugating enzyme]-L-cysteine + [acceptor protein]-L-lysine = [E2 ubiquitin-conjugating enzyme]-L-cysteine + N(6)-ubiquitinyl-[acceptor protein]-L-lysine.. It participates in protein modification; protein ubiquitination. This Arabidopsis thaliana (Mouse-ear cress) protein is RING-H2 finger protein ATL47 (ATL47).